Reading from the N-terminus, the 96-residue chain is Large ribosomal subunit protein bL28 (96 aa).

Positions 1-22 (MSRSCELTGKGVQSGNNVSHAN) are enriched in polar residues. Positions 1–24 (MSRSCELTGKGVQSGNNVSHANNK) are disordered.

It belongs to the bacterial ribosomal protein bL28 family.

This is Large ribosomal subunit protein bL28 from Rhizobium meliloti (strain 1021) (Ensifer meliloti).